A 406-amino-acid chain; its full sequence is tRNA-specific 2-thiouridylase MnmA (406 aa).

Residues 6 to 13 (AMSGGVDS) and leucine 32 each bind ATP. Catalysis depends on cysteine 101, which acts as the Nucleophile. Cysteine 101 and cysteine 193 are joined by a disulfide. Glycine 125 contributes to the ATP binding site. Residues 143 to 145 (KDQ) form an interaction with tRNA region. The Cysteine persulfide intermediate role is filled by cysteine 193. Positions 378–406 (GAPIEEQPAPGTVGAVDADAIEQGEDAQR) are disordered. Over residues 396–406 (DAIEQGEDAQR) the composition is skewed to acidic residues.

This sequence belongs to the MnmA/TRMU family.

Its subcellular location is the cytoplasm. It catalyses the reaction S-sulfanyl-L-cysteinyl-[protein] + uridine(34) in tRNA + AH2 + ATP = 2-thiouridine(34) in tRNA + L-cysteinyl-[protein] + A + AMP + diphosphate + H(+). Catalyzes the 2-thiolation of uridine at the wobble position (U34) of tRNA, leading to the formation of s(2)U34. The polypeptide is tRNA-specific 2-thiouridylase MnmA (Corynebacterium urealyticum (strain ATCC 43042 / DSM 7109)).